A 427-amino-acid chain; its full sequence is Enolase (427 aa).

Gln-163 contributes to the (2R)-2-phosphoglycerate binding site. Glu-205 functions as the Proton donor in the catalytic mechanism. Asp-242, Glu-285, and Asp-312 together coordinate Mg(2+). Positions 337, 366, 367, and 388 each coordinate (2R)-2-phosphoglycerate. Catalysis depends on Lys-337, which acts as the Proton acceptor.

Belongs to the enolase family. The cofactor is Mg(2+).

It is found in the cytoplasm. The protein localises to the secreted. Its subcellular location is the cell surface. It carries out the reaction (2R)-2-phosphoglycerate = phosphoenolpyruvate + H2O. The protein operates within carbohydrate degradation; glycolysis; pyruvate from D-glyceraldehyde 3-phosphate: step 4/5. Its function is as follows. Catalyzes the reversible conversion of 2-phosphoglycerate (2-PG) into phosphoenolpyruvate (PEP). It is essential for the degradation of carbohydrates via glycolysis. The sequence is that of Enolase from Variovorax paradoxus (strain S110).